Here is a 127-residue protein sequence, read N- to C-terminus: MAKITRKRRVKKNIESGIVHIQSTFNNTIVMITDVHGNALAWSSAGALGFKGSKKSTPFAAQMASEAAAKAAQEQGLKTVSVTVKGPGSGRESAIRALAAAGLNVTSISDVTPVPHNGARPPKRRRV.

It belongs to the universal ribosomal protein uS11 family. Part of the 30S ribosomal subunit. Interacts with proteins S7 and S18. Binds to IF-3.

Its function is as follows. Located on the platform of the 30S subunit, it bridges several disparate RNA helices of the 16S rRNA. Forms part of the Shine-Dalgarno cleft in the 70S ribosome. The protein is Small ribosomal subunit protein uS11 of Lactococcus lactis subsp. lactis (strain IL1403) (Streptococcus lactis).